The chain runs to 161 residues: Small ribosomal subunit protein uS9 (161 aa).

Belongs to the universal ribosomal protein uS9 family.

The chain is Small ribosomal subunit protein uS9 (rpsI) from Rickettsia prowazekii (strain Madrid E).